We begin with the raw amino-acid sequence, 453 residues long: uncharacterized protein (453 aa).

Cysteine 74, cysteine 80, cysteine 83, and cysteine 162 together coordinate [4Fe-4S] cluster. Residues glutamine 286, tyrosine 315, glutamate 336, and aspartate 384 each contribute to the S-adenosyl-L-methionine site. The Nucleophile role is filled by cysteine 411.

The protein belongs to the class I-like SAM-binding methyltransferase superfamily. RNA M5U methyltransferase family.

This is an uncharacterized protein from Staphylococcus aureus (strain COL).